A 273-amino-acid polypeptide reads, in one-letter code: 4-hydroxy-tetrahydrodipicolinate reductase (273 aa).

NAD(+) is bound by residues 12–17 and Glu38; that span reads GAGGRM. Arg39 contacts NADP(+). Residues 102–104 and 126–129 each bind NAD(+); these read GTT and AANF. The active-site Proton donor/acceptor is His159. His160 contributes to the (S)-2,3,4,5-tetrahydrodipicolinate binding site. The active-site Proton donor is Lys163. 169–170 serves as a coordination point for (S)-2,3,4,5-tetrahydrodipicolinate; sequence GT.

The protein belongs to the DapB family. Homotetramer.

The protein resides in the cytoplasm. The enzyme catalyses (S)-2,3,4,5-tetrahydrodipicolinate + NAD(+) + H2O = (2S,4S)-4-hydroxy-2,3,4,5-tetrahydrodipicolinate + NADH + H(+). It carries out the reaction (S)-2,3,4,5-tetrahydrodipicolinate + NADP(+) + H2O = (2S,4S)-4-hydroxy-2,3,4,5-tetrahydrodipicolinate + NADPH + H(+). It participates in amino-acid biosynthesis; L-lysine biosynthesis via DAP pathway; (S)-tetrahydrodipicolinate from L-aspartate: step 4/4. Catalyzes the conversion of 4-hydroxy-tetrahydrodipicolinate (HTPA) to tetrahydrodipicolinate. This is 4-hydroxy-tetrahydrodipicolinate reductase from Shigella flexneri.